The chain runs to 172 residues: Galectin-related protein (172 aa).

A2 bears the N-acetylalanine mark. Residues S22 and S25 each carry the phosphoserine modification. In terms of domain architecture, Galectin spans 39-168 (PFCGHIKGGM…TIKINGDLQI (130 aa)).

Monomer.

Does not bind lactose, and may not bind carbohydrates. The protein is Galectin-related protein (Lgalsl) of Mus musculus (Mouse).